The following is a 152-amino-acid chain: Ribosome maturation factor RimP (152 aa).

The protein belongs to the RimP family.

The protein resides in the cytoplasm. In terms of biological role, required for maturation of 30S ribosomal subunits. The chain is Ribosome maturation factor RimP from Stutzerimonas stutzeri (strain A1501) (Pseudomonas stutzeri).